Here is a 135-residue protein sequence, read N- to C-terminus: Mediator of RNA polymerase II transcription subunit 10 (135 aa).

The protein belongs to the Mediator complex subunit 10 family. In terms of assembly, component of the Mediator complex.

Its subcellular location is the nucleus. In terms of biological role, component of the Mediator complex, a coactivator involved in the regulated transcription of nearly all RNA polymerase II-dependent genes. Mediator functions as a bridge to convey information from gene-specific regulatory proteins to the basal RNA polymerase II transcription machinery. Mediator is recruited to promoters by direct interactions with regulatory proteins and serves as a scaffold for the assembly of a functional preinitiation complex with RNA polymerase II and the general transcription factors. The chain is Mediator of RNA polymerase II transcription subunit 10 (med10) from Xenopus laevis (African clawed frog).